Here is a 242-residue protein sequence, read N- to C-terminus: HTH-type transcriptional regulator GadW (242 aa).

In terms of domain architecture, HTH araC/xylS-type spans 139 to 236 (GKVERLISFD…GVTPHQFSQH (98 aa)). DNA-binding regions (H-T-H motif) lie at residues 156 to 177 (RDIA…QDEN) and 203 to 226 (LHTI…RQYY).

In terms of assembly, homodimer.

In terms of biological role, depending on the conditions (growth phase and medium), acts as a positive or negative regulator of gadA and gadBC. Repression occurs directly or via the repression of the expression of gadX. Activation occurs directly by the binding of GadW to the gadA and gadBC promoters. The polypeptide is HTH-type transcriptional regulator GadW (gadW) (Escherichia coli O6:H1 (strain CFT073 / ATCC 700928 / UPEC)).